Reading from the N-terminus, the 234-residue chain is Transcriptional activator protein TraR (234 aa).

In terms of domain architecture, HTH luxR-type spans 167–232 (TAEDAAWLDP…HLTALAIKRK (66 aa)). The H-T-H motif DNA-binding region spans 191 to 210 (MEEIADVEEVKYNSVRVKLR).

Belongs to the autoinducer-regulated transcriptional regulatory protein family.

Positive regulation of conjugal transfer of Ti plasmids. This is Transcriptional activator protein TraR (traR) from Agrobacterium vitis (Rhizobium vitis).